The chain runs to 512 residues: Maturase K (512 aa).

It belongs to the intron maturase 2 family. MatK subfamily.

It localises to the plastid. The protein resides in the chloroplast. In terms of biological role, usually encoded in the trnK tRNA gene intron. Probably assists in splicing its own and other chloroplast group II introns. In Platanus occidentalis (Sycamore), this protein is Maturase K.